We begin with the raw amino-acid sequence, 236 residues long: tRNA1(Val) (adenine(37)-N6)-methyltransferase (236 aa).

Belongs to the methyltransferase superfamily. tRNA (adenine-N(6)-)-methyltransferase family.

Its subcellular location is the cytoplasm. It carries out the reaction adenosine(37) in tRNA1(Val) + S-adenosyl-L-methionine = N(6)-methyladenosine(37) in tRNA1(Val) + S-adenosyl-L-homocysteine + H(+). Specifically methylates the adenine in position 37 of tRNA(1)(Val) (anticodon cmo5UAC). This chain is tRNA1(Val) (adenine(37)-N6)-methyltransferase, found in Actinobacillus pleuropneumoniae serotype 7 (strain AP76).